We begin with the raw amino-acid sequence, 343 residues long: Anthranilate phosphoribosyltransferase (343 aa).

Residues G84, 87-88, T92, 94-97, 112-120, and S124 each bind 5-phospho-alpha-D-ribose 1-diphosphate; these read GD, NIST, and KHGNRGVSS. G84 serves as a coordination point for anthranilate. S96 contacts Mg(2+). An anthranilate-binding site is contributed by N115. R170 provides a ligand contact to anthranilate. Residues D229 and E230 each coordinate Mg(2+).

This sequence belongs to the anthranilate phosphoribosyltransferase family. Homodimer. Mg(2+) serves as cofactor.

It catalyses the reaction N-(5-phospho-beta-D-ribosyl)anthranilate + diphosphate = 5-phospho-alpha-D-ribose 1-diphosphate + anthranilate. It participates in amino-acid biosynthesis; L-tryptophan biosynthesis; L-tryptophan from chorismate: step 2/5. In terms of biological role, catalyzes the transfer of the phosphoribosyl group of 5-phosphorylribose-1-pyrophosphate (PRPP) to anthranilate to yield N-(5'-phosphoribosyl)-anthranilate (PRA). This chain is Anthranilate phosphoribosyltransferase, found in Burkholderia ambifaria (strain MC40-6).